Consider the following 309-residue polypeptide: Probable L,D-transpeptidase ErfK/SrfK (309 aa).

The N-terminal stretch at 1–21 (MRRITPFFPFFVLLVSHFSLA) is a signal peptide. The 136-residue stretch at 96-231 (EGIVVNVAEM…VPVGTRVQII (136 aa)) folds into the L,D-TPase catalytic domain. The active-site Proton donor/acceptor is His191. The active-site Nucleophile is the Cys207.

The protein belongs to the YkuD family.

It localises to the periplasm. Its pathway is cell wall biogenesis; peptidoglycan biosynthesis. The protein is Probable L,D-transpeptidase ErfK/SrfK (erfK) of Salmonella typhimurium (strain LT2 / SGSC1412 / ATCC 700720).